The primary structure comprises 532 residues: Tyrosine-protein kinase Src-1 (532 aa).

Positions 1–52 are disordered; sequence MGATKSKPREGGPRSRSLDIVEGSHQPFTSLSASQTPNKSLDSHRPPAQPFG. Gly2 carries the N-myristoyl glycine lipid modification. The span at 7 to 19 shows a compositional bias: basic and acidic residues; sequence KPREGGPRSRSLD. Over residues 26-40 the composition is skewed to polar residues; sequence QPFTSLSASQTPNKS. In terms of domain architecture, SH3 spans 80-141; the sequence is GGVTTFVALY…PSNYVAPSDS (62 aa). Residues 147-244 enclose the SH2 domain; it reads WYLGKITRRE…GLCHRLTTVC (98 aa). One can recognise a Protein kinase domain in the interval 266 to 519; the sequence is LRLELKLGQG…YLQAFLEDYF (254 aa). Residues 272-280 and Lys294 contribute to the ATP site; that span reads LGQGCFGEV. Asp385 functions as the Proton acceptor in the catalytic mechanism. Tyr415 carries the phosphotyrosine; by autocatalysis modification.

It belongs to the protein kinase superfamily. Tyr protein kinase family. SRC subfamily.

It localises to the cell membrane. The enzyme catalyses L-tyrosyl-[protein] + ATP = O-phospho-L-tyrosyl-[protein] + ADP + H(+). The sequence is that of Tyrosine-protein kinase Src-1 (src-a) from Xenopus laevis (African clawed frog).